A 284-amino-acid chain; its full sequence is MEMO1 family protein MmarC5_0191 (284 aa).

Belongs to the MEMO1 family.

The polypeptide is MEMO1 family protein MmarC5_0191 (Methanococcus maripaludis (strain C5 / ATCC BAA-1333)).